Consider the following 95-residue polypeptide: Co-chaperonin GroES (95 aa).

The protein belongs to the GroES chaperonin family. Heptamer of 7 subunits arranged in a ring. Interacts with the chaperonin GroEL.

Its subcellular location is the cytoplasm. Functionally, together with the chaperonin GroEL, plays an essential role in assisting protein folding. The GroEL-GroES system forms a nano-cage that allows encapsulation of the non-native substrate proteins and provides a physical environment optimized to promote and accelerate protein folding. GroES binds to the apical surface of the GroEL ring, thereby capping the opening of the GroEL channel. In Desulforapulum autotrophicum (strain ATCC 43914 / DSM 3382 / VKM B-1955 / HRM2) (Desulfobacterium autotrophicum), this protein is Co-chaperonin GroES.